A 320-amino-acid chain; its full sequence is Variant surface glycoprotein ILTAT 1.2 (320 aa).

Residues N146, N282, and N295 are each glycosylated (N-linked (GlcNAc...) asparagine). Residues 297–320 form a disordered region; sequence TKATENGVPVAQTQTGGSETTTEK. The span at 308-320 shows a compositional bias: low complexity; that stretch reads QTQTGGSETTTEK.

The protein resides in the cell membrane. Functionally, VSG forms a coat on the surface of the parasite. The trypanosome evades the immune response of the host by expressing a series of antigenically distinct VSGs from an estimated 1000 VSG genes. This is Variant surface glycoprotein ILTAT 1.2 from Trypanosoma brucei brucei.